The following is a 989-amino-acid chain: ATP-dependent 6-phosphofructokinase subunit alpha (989 aa).

The tract at residues 1–585 (MPEPSISALS…SYESFLSVSK (585 aa)) is N-terminal catalytic PFK domain 1. ATP contacts are provided by residues Gly-220, 283–284 (RS), and 313–316 (GDGS). Asp-314 provides a ligand contact to Mg(2+). Beta-D-fructose 6-phosphate is bound by residues 359 to 361 (SID), Arg-396, 403 to 405 (MGR), Glu-460, Arg-487, and 493 to 496 (HVQR). Asp-361 functions as the Proton acceptor in the catalytic mechanism. The segment at 586–599 (YDDGSYLVPESSRL) is interdomain linker. Residues 600–989 (NIAIIHVGAP…LSGRLSIRTT (390 aa)) form a C-terminal regulatory PFK domain 2 region. Residues Arg-670, 727–731 (TVSNN), Arg-765, 772–774 (QGG), Glu-832, Arg-858, 864–867 (HVQQ), and Arg-963 each bind beta-D-fructose 2,6-bisphosphate.

This sequence belongs to the phosphofructokinase type A (PFKA) family. ATP-dependent PFK group I subfamily. Eukaryotic two domain clade 'E' sub-subfamily. Heterododecamer of 4 alpha, 4 beta and 4 gamma chains. The gamma chain bridges the N-terminal halves of the alpha and beta subunits. Mg(2+) is required as a cofactor.

It is found in the cytoplasm. It carries out the reaction beta-D-fructose 6-phosphate + ATP = beta-D-fructose 1,6-bisphosphate + ADP + H(+). The protein operates within carbohydrate degradation; glycolysis; D-glyceraldehyde 3-phosphate and glycerone phosphate from D-glucose: step 3/4. With respect to regulation, allosterically activated by ADP, AMP, or fructose 2,6-bisphosphate, and allosterically inhibited by ATP or citrate. Its function is as follows. Catalyzes the phosphorylation of D-fructose 6-phosphate to fructose 1,6-bisphosphate by ATP, the first committing step of glycolysis. Involved in the modulation of glucose-induced microautophagy of peroxisomes independent of its ability to metabolize glucose intermediates. This chain is ATP-dependent 6-phosphofructokinase subunit alpha (PFK1), found in Komagataella phaffii (strain GS115 / ATCC 20864) (Yeast).